The primary structure comprises 291 residues: Pituitary-specific positive transcription factor 1 (291 aa).

Residues 5–13 (PFTSADTFI) carry the 9aaTAD motif. The POU-specific domain maps to 124–198 (MDSPEIRELE…ILSKWLEEAE (75 aa)). The homeobox DNA-binding region spans 214–273 (KRKRRTTISIAAKDALERHFGEQNKPSSQEILRMAEELNLEKEVVRVWFCNRRQREKRVK).

This sequence belongs to the POU transcription factor family. Class-1 subfamily. Interacts with PITX1. Interacts with LHX3. Interacts with ELK1.

Its subcellular location is the nucleus. Functionally, transcription factor involved in the specification of the lactotrope, somatotrope, and thyrotrope phenotypes in the developing anterior pituitary. Activates growth hormone and prolactin genes. Specifically binds to the consensus sequence 5'-TAAAT-3'. This Sus scrofa (Pig) protein is Pituitary-specific positive transcription factor 1 (POU1F1).